A 258-amino-acid chain; its full sequence is Hydroxyacylglutathione hydrolase (258 aa).

Zn(2+) contacts are provided by His-55, His-57, Asp-59, His-60, His-115, Asp-132, and His-170.

This sequence belongs to the metallo-beta-lactamase superfamily. Glyoxalase II family. In terms of assembly, monomer. Requires Zn(2+) as cofactor.

The enzyme catalyses an S-(2-hydroxyacyl)glutathione + H2O = a 2-hydroxy carboxylate + glutathione + H(+). The protein operates within secondary metabolite metabolism; methylglyoxal degradation; (R)-lactate from methylglyoxal: step 2/2. Functionally, thiolesterase that catalyzes the hydrolysis of S-D-lactoyl-glutathione to form glutathione and D-lactic acid. The sequence is that of Hydroxyacylglutathione hydrolase from Shewanella denitrificans (strain OS217 / ATCC BAA-1090 / DSM 15013).